A 214-amino-acid chain; its full sequence is Small ribosomal subunit protein eS6 (214 aa).

It belongs to the eukaryotic ribosomal protein eS6 family.

This is Small ribosomal subunit protein eS6 (rps6e) from Saccharolobus islandicus (strain Y.G.57.14 / Yellowstone #1) (Sulfolobus islandicus).